Here is a 285-residue protein sequence, read N- to C-terminus: MTALLIDGNALSKTLRAQAAERAAALTARGHQPGLAVILVGANPASEVYVRNKIKACEDNGFFSLKDAYPATLSEADLLARIDELNRDPKIHGILVQLPLPAHIDSHKVIEAIAPEKDVDGFHVANAGALMTGKPLFRPCTPYGVMKMFEAHGIALQGANAVVIGRSNIVGKPMAMMLLDAGATVTICHSKTRDLAAHTREADIVVAAVGKRNILTADMVKPGATVIDVGMNRDDAGKLCGDVDFAGAKEVAGYITPVPGGVGPMTITMLLINTIESAERAAAAA.

Residues 165–167 (GRS) and Ser190 each bind NADP(+).

It belongs to the tetrahydrofolate dehydrogenase/cyclohydrolase family. As to quaternary structure, homodimer.

It carries out the reaction (6R)-5,10-methylene-5,6,7,8-tetrahydrofolate + NADP(+) = (6R)-5,10-methenyltetrahydrofolate + NADPH. The catalysed reaction is (6R)-5,10-methenyltetrahydrofolate + H2O = (6R)-10-formyltetrahydrofolate + H(+). It participates in one-carbon metabolism; tetrahydrofolate interconversion. Catalyzes the oxidation of 5,10-methylenetetrahydrofolate to 5,10-methenyltetrahydrofolate and then the hydrolysis of 5,10-methenyltetrahydrofolate to 10-formyltetrahydrofolate. This Burkholderia orbicola (strain AU 1054) protein is Bifunctional protein FolD.